Reading from the N-terminus, the 521-residue chain is Methionine--tRNA ligase (521 aa).

The 'HIGH' region signature appears at 14 to 24 (YYSSGNPHIGH). Zn(2+) contacts are provided by cysteine 129, cysteine 132, cysteine 151, and histidine 155. Positions 306–310 (KMSKS) match the 'KMSKS' region motif. Lysine 309 contacts ATP.

The protein belongs to the class-I aminoacyl-tRNA synthetase family. MetG type 2A subfamily. Monomer. It depends on Zn(2+) as a cofactor.

It is found in the cytoplasm. It catalyses the reaction tRNA(Met) + L-methionine + ATP = L-methionyl-tRNA(Met) + AMP + diphosphate. Its function is as follows. Is required not only for elongation of protein synthesis but also for the initiation of all mRNA translation through initiator tRNA(fMet) aminoacylation. This chain is Methionine--tRNA ligase, found in Ureaplasma parvum serovar 3 (strain ATCC 700970).